A 174-amino-acid polypeptide reads, in one-letter code: Peptide methionine sulfoxide reductase MsrA (174 aa).

The active site involves Cys10.

The protein belongs to the MsrA Met sulfoxide reductase family.

The enzyme catalyses L-methionyl-[protein] + [thioredoxin]-disulfide + H2O = L-methionyl-(S)-S-oxide-[protein] + [thioredoxin]-dithiol. It carries out the reaction [thioredoxin]-disulfide + L-methionine + H2O = L-methionine (S)-S-oxide + [thioredoxin]-dithiol. Has an important function as a repair enzyme for proteins that have been inactivated by oxidation. Catalyzes the reversible oxidation-reduction of methionine sulfoxide in proteins to methionine. In Acinetobacter baumannii (strain SDF), this protein is Peptide methionine sulfoxide reductase MsrA.